The sequence spans 111 residues: Cytochrome b-c1 complex subunit 7 (111 aa).

Ala-2 is subject to N-acetylalanine. Position 19 is an N6-acetyllysine (Lys-19). Lys-78 is subject to N6-acetyllysine; alternate. Lys-78 is modified (N6-succinyllysine; alternate). Lys-83 is subject to N6-acetyllysine. An N6-acetyllysine; alternate modification is found at Lys-88. Lys-88 is subject to N6-succinyllysine; alternate. Lys-96 carries the post-translational modification N6-acetyllysine.

This sequence belongs to the UQCRB/QCR7 family. As to quaternary structure, component of the ubiquinol-cytochrome c oxidoreductase (cytochrome b-c1 complex, complex III, CIII), a multisubunit enzyme composed of 11 subunits. The complex is composed of 3 respiratory subunits cytochrome b, cytochrome c1 and Rieske protein UQCRFS1, 2 core protein subunits UQCRC1/QCR1 and UQCRC2/QCR2, and 6 low-molecular weight protein subunits UQCRH/QCR6, UQCRB/QCR7, UQCRQ/QCR8, UQCR10/QCR9, UQCR11/QCR10 and subunit 9, the cleavage product of Rieske protein UQCRFS1. The complex exists as an obligatory dimer and forms supercomplexes (SCs) in the inner mitochondrial membrane with NADH-ubiquinone oxidoreductase (complex I, CI) and cytochrome c oxidase (complex IV, CIV), resulting in different assemblies (supercomplex SCI(1)III(2)IV(1) and megacomplex MCI(2)III(2)IV(2)).

The protein localises to the mitochondrion inner membrane. Its function is as follows. Component of the ubiquinol-cytochrome c oxidoreductase, a multisubunit transmembrane complex that is part of the mitochondrial electron transport chain which drives oxidative phosphorylation. The respiratory chain contains 3 multisubunit complexes succinate dehydrogenase (complex II, CII), ubiquinol-cytochrome c oxidoreductase (cytochrome b-c1 complex, complex III, CIII) and cytochrome c oxidase (complex IV, CIV), that cooperate to transfer electrons derived from NADH and succinate to molecular oxygen, creating an electrochemical gradient over the inner membrane that drives transmembrane transport and the ATP synthase. The cytochrome b-c1 complex catalyzes electron transfer from ubiquinol to cytochrome c, linking this redox reaction to translocation of protons across the mitochondrial inner membrane, with protons being carried across the membrane as hydrogens on the quinol. In the process called Q cycle, 2 protons are consumed from the matrix, 4 protons are released into the intermembrane space and 2 electrons are passed to cytochrome c. The sequence is that of Cytochrome b-c1 complex subunit 7 (UQCRB) from Bos taurus (Bovine).